We begin with the raw amino-acid sequence, 242 residues long: DNA repair protein RecO (242 aa).

The protein belongs to the RecO family. As to quaternary structure, monomer.

Functionally, involved in DNA repair and RecF pathway recombination. The protein is DNA repair protein RecO of Shigella dysenteriae serotype 1 (strain Sd197).